Consider the following 82-residue polypeptide: Putative membrane protein insertion efficiency factor (82 aa).

The protein belongs to the UPF0161 family.

It localises to the cell membrane. In terms of biological role, could be involved in insertion of integral membrane proteins into the membrane. The sequence is that of Putative membrane protein insertion efficiency factor from Streptococcus thermophilus (strain ATCC BAA-491 / LMD-9).